The following is a 421-amino-acid chain: Putative nickel insertion protein (421 aa).

Belongs to the LarC family.

The protein is Putative nickel insertion protein of Gloeobacter violaceus (strain ATCC 29082 / PCC 7421).